The primary structure comprises 276 residues: Extracellular metalloprotease 1 (276 aa).

An N-terminal signal peptide occupies residues 1-18 (MRVSVPVLALAFGSLAAA). Histidine 191 lines the Zn(2+) pocket. Glutamate 192 is an active-site residue. A Zn(2+)-binding site is contributed by histidine 195. The interval 211–233 (GDYVSDTPPQRSPSSGCPVGRDS) is disordered. Cysteines 227 and 253 form a disulfide.

It belongs to the peptidase M43B family.

Its subcellular location is the secreted. In terms of biological role, secreted metalloproteinase that allows assimilation of proteinaceous substrates. Pays a pivotal role as a pathogenicity determinant during infections and contributes to the ability of the pathogen to persist within the mammalian host. Digests an immunodominant cell surface antigen (SOWgp) and prevents host recognition of endospores during the phase of development when these fungal cells are most vulnerable to phagocytic cell defenses. This chain is Extracellular metalloprotease 1 (MEP1), found in Coccidioides posadasii (strain C735) (Valley fever fungus).